The chain runs to 229 residues: 5'-methylthioadenosine/S-adenosylhomocysteine nucleosidase (229 aa).

Glu12 acts as the Proton acceptor in catalysis. Residues Gly78, Ile152, and 173 to 174 (ME) each bind substrate. The active-site Proton donor is Asp197.

It belongs to the PNP/UDP phosphorylase family. MtnN subfamily.

The enzyme catalyses S-adenosyl-L-homocysteine + H2O = S-(5-deoxy-D-ribos-5-yl)-L-homocysteine + adenine. It carries out the reaction S-methyl-5'-thioadenosine + H2O = 5-(methylsulfanyl)-D-ribose + adenine. It catalyses the reaction 5'-deoxyadenosine + H2O = 5-deoxy-D-ribose + adenine. Its pathway is amino-acid biosynthesis; L-methionine biosynthesis via salvage pathway; S-methyl-5-thio-alpha-D-ribose 1-phosphate from S-methyl-5'-thioadenosine (hydrolase route): step 1/2. Functionally, catalyzes the irreversible cleavage of the glycosidic bond in both 5'-methylthioadenosine (MTA) and S-adenosylhomocysteine (SAH/AdoHcy) to adenine and the corresponding thioribose, 5'-methylthioribose and S-ribosylhomocysteine, respectively. Also cleaves 5'-deoxyadenosine, a toxic by-product of radical S-adenosylmethionine (SAM) enzymes, into 5-deoxyribose and adenine. The polypeptide is 5'-methylthioadenosine/S-adenosylhomocysteine nucleosidase (Haemophilus influenzae (strain PittEE)).